A 468-amino-acid polypeptide reads, in one-letter code: Zinc finger protein 672 (468 aa).

4 consecutive C2H2-type zinc fingers follow at residues 15–37, 43–65, 71–93, and 100–123; these read YSCS…ERAH, FCCL…RWTH, YICS…LGTH, and RPCR…ARQH. The C2H2-type 5; degenerate zinc finger occupies 129-151; it reads HRCPLCARSFRQSALPFHLARAH. 9 consecutive C2H2-type zinc fingers follow at residues 167-189, 202-224, 230-252, 258-280, 286-308, 314-336, 342-364, 370-392, and 398-420; these read YHCT…SRIH, HLCG…LQRH, FKCP…QRTH, YACS…QRSH, HVCA…QRSH, FPCP…LRTH, YHCE…LRNH, HKCP…RKTH, and AECT…QRSH.

This sequence belongs to the krueppel C2H2-type zinc-finger protein family.

The protein resides in the nucleus. Its function is as follows. May be involved in transcriptional regulation. This Mus musculus (Mouse) protein is Zinc finger protein 672 (Znf672).